The following is a 906-amino-acid chain: Interference hedgehog (906 aa).

Residues 1–20 (MSPLTSSLLLFSLLTSSLEA) form the signal peptide. Over 21 to 715 (IPVLQPSFPP…SHNETVSMSP (695 aa)) the chain is Extracellular. Ig-like C2-type domains are found at residues 39-144 (PGVR…TARL), 134-236 (PLVV…ISSS), 252-341 (PHLL…INVT), and 346-433 (PRIT…LQVN). Cys-62 and Cys-128 are disulfide-bonded. N-linked (GlcNAc...) asparagine glycosylation is found at Asn-85, Asn-104, Asn-148, and Asn-209. 2 disulfide bridges follow: Cys-173–Cys-220 and Cys-276–Cys-324. N-linked (GlcNAc...) asparagine glycans are attached at residues Asn-339 and Asn-388. Cys-367 and Cys-415 are disulfide-bonded. A compositionally biased stretch (polar residues) spans 427–439 (GTLLQVNPKQIQS). The segment at 427 to 476 (GTLLQVNPKQIQSEPRETGSGGGFGSHRSMKPVNHGQKPTKMIPPSPPNV) is disordered. 2 Fibronectin type-III domains span residues 470 to 578 (PPSP…LQPG) and 586 to 681 (VPEL…TQRP). A glycan (N-linked (GlcNAc...) asparagine) is linked at Asn-475. Heparin-binding residues include Arg-506, Lys-512, Lys-514, and Arg-552. N-linked (GlcNAc...) asparagine glycosylation is present at Asn-568. The segment at 673-713 (LKQGRTQRPRASTTEEPTIQGIGDRDTTSHNQPSHNETVSM) is disordered. Composition is skewed to polar residues over residues 676 to 689 (GRTQRPRASTTEEP) and 701 to 713 (SHNQPSHNETVSM). The chain crosses the membrane as a helical span at residues 716–736 (MLTGTIGGGALLLILLVSAFL). Residues 737 to 906 (CMCRRRSPRG…SSGSLNSVGV (170 aa)) lie on the Cytoplasmic side of the membrane. Positions 789–906 (AQQQQQQLDE…SSGSLNSVGV (118 aa)) are disordered. 2 stretches are compositionally biased toward low complexity: residues 854-866 (GNNNNLNQSSEAG) and 890-906 (SSRSENLSSGSLNSVGV).

The protein belongs to the immunoglobulin superfamily. IHOG family. In terms of assembly, homodimer. Heterotetramer; 2 iHog chains bind 2 hh chains when facilitated by heparin, heparin is required to promote high-affinity interactions between hh and iHog.

Its subcellular location is the membrane. In terms of biological role, mediates response to the active Hedgehog (Hh) protein signal in embryos, functioning upstream or at the level of patched (ptc). The polypeptide is Interference hedgehog (Drosophila persimilis (Fruit fly)).